The following is a 355-amino-acid chain: MALRLLRLVPASAPARGLAAGAQRVGRIHTSVHCKLRYGLLAAILGDKTTKKLHEYSRVITVDGNICSGKNKLAKEIAQQLGMKHYPEAGIQYSSTTTGDGRPLDIEFSGSCSLEKFYDDPKSNDGNSYRLQSWLYASRLLQYADALEHLLSTGQGVVLERSIYSDFVFLEAMYNQGYIRKQCVDHYNEIKRLTLPEYLPPHAVIYIDVPVPEVQSRIQKKGDPHEMKVTSAYLQDIENAYKKTFLPKMSEMCEVLVYDSWEAEDPTKVVEDIEYLKYNKGPWLKQDDWTFHYLRMLVQDKTEVLNYTTIPVYLPEITIGAHQGSRIYNSFRELPGRKYAPGYNAEVGDKWIWLK.

The transit peptide at 1–35 directs the protein to the mitochondrion; sequence MALRLLRLVPASAPARGLAAGAQRVGRIHTSVHCK. Lys122 is subject to N6-acetyllysine; alternate. Lys122 carries the post-translational modification N6-succinyllysine; alternate. The residue at position 250 (Ser250) is a Phosphoserine; by PINK1. Residue Lys285 is modified to N6-succinyllysine.

This sequence belongs to the complex I NDUFA10 subunit family. As to quaternary structure, complex I is composed of 45 different subunits. This a component of the hydrophobic protein fraction. It depends on FAD as a cofactor. Phosphorylation at Ser-250 by PINK1 is required for the binding and/or reduction of the complex I substrate ubiquinone. Post-translationally, acetylation of Lys-242 is observed in liver mitochondria from fasted mice but not from fed mice.

It is found in the mitochondrion matrix. In terms of biological role, accessory subunit of the mitochondrial membrane respiratory chain NADH dehydrogenase (Complex I), that is believed not to be involved in catalysis. Complex I functions in the transfer of electrons from NADH to the respiratory chain. The immediate electron acceptor for the enzyme is believed to be ubiquinone. The polypeptide is NADH dehydrogenase [ubiquinone] 1 alpha subcomplex subunit 10, mitochondrial (Ndufa10) (Mus musculus (Mouse)).